We begin with the raw amino-acid sequence, 358 residues long: Starch-binding domain-containing protein 1 (358 aa).

Topologically, residues 1-6 (MGAVWS) are extracellular. A helical transmembrane segment spans residues 7–23 (ALLVGGGLAGALFVWLL). At 24-358 (RGGPGDTGKD…KVVHAWWGIH (335 aa)) the chain is on the cytoplasmic side. A compositionally biased stretch (basic and acidic residues) spans 30–42 (TGKDGDAEQEKDA). Disordered regions lie at residues 30-70 (TGKD…QELV) and 104-151 (SREV…SPMG). Residues 50 to 66 (PGGHQSGSSGLSPGPSG) show a composition bias toward low complexity. S65 bears the Phosphoserine mark. Basic and acidic residues predominate over residues 106–115 (EVCDNSREHV). At S117 the chain carries Phosphoserine. The span at 126–140 (PATSETSNSRSYSEV) shows a compositional bias: polar residues. 4 positions are modified to phosphoserine: S148, S175, S188, and S194. Positions 200–206 (HEEWEMV) match the LIR motif. Phosphoserine is present on residues S210, S211, and S220. The CBM20 domain occupies 258 to 357 (PAGSQQVSVR…DKVVHAWWGI (100 aa)).

In terms of assembly, interacts with the ATG8 family proteins GABARAP and GABARAPL1. Interacts with several glycogen-associated proteins, such as GYS2 (liver glycogen synthase), GDE (glycogen debranching enzyme), GBE1 (glycogen branching enzyme 1) and EPM2A (Laforin). In terms of processing, ubiquitinated, which leads to proteasomal degradation. As to expression, expressed at high level in skeletal and cardiac muscles. Moderately expressed in liver and placenta. No expression is found in pancreas, kidney or lung. Present in skeletal muscle, heart and placenta (at protein level).

Its subcellular location is the preautophagosomal structure membrane. It is found in the endoplasmic reticulum membrane. It localises to the cell membrane. The protein resides in the sarcolemma. The protein localises to the T-tubule. Acts as a cargo receptor for glycogen. Delivers its cargo to an autophagic pathway called glycophagy, resulting in the transport of glycogen to lysosomes. The sequence is that of Starch-binding domain-containing protein 1 from Homo sapiens (Human).